A 454-amino-acid polypeptide reads, in one-letter code: CCA-adding enzyme (454 aa).

Residues Ser-53 and Lys-56 each contribute to the ATP site. Residues Ser-53 and Lys-56 each coordinate CTP. Positions 65, 67, and 119 each coordinate Mg(2+). Residues His-142, Lys-161, and Tyr-170 each coordinate ATP. His-142, Lys-161, and Tyr-170 together coordinate CTP.

Belongs to the tRNA nucleotidyltransferase/poly(A) polymerase family. Archaeal CCA-adding enzyme subfamily. In terms of assembly, homodimer. It depends on Mg(2+) as a cofactor.

The enzyme catalyses a tRNA precursor + 2 CTP + ATP = a tRNA with a 3' CCA end + 3 diphosphate. The catalysed reaction is a tRNA with a 3' CCA end + 2 CTP + ATP = a tRNA with a 3' CCACCA end + 3 diphosphate. Its function is as follows. Catalyzes the addition and repair of the essential 3'-terminal CCA sequence in tRNAs without using a nucleic acid template. Adds these three nucleotides in the order of C, C, and A to the tRNA nucleotide-73, using CTP and ATP as substrates and producing inorganic pyrophosphate. tRNA 3'-terminal CCA addition is required both for tRNA processing and repair. Also involved in tRNA surveillance by mediating tandem CCA addition to generate a CCACCA at the 3' terminus of unstable tRNAs. While stable tRNAs receive only 3'-terminal CCA, unstable tRNAs are marked with CCACCA and rapidly degraded. This chain is CCA-adding enzyme, found in Thermococcus gammatolerans (strain DSM 15229 / JCM 11827 / EJ3).